Here is a 419-residue protein sequence, read N- to C-terminus: Light-independent protochlorophyllide reductase subunit N (419 aa).

Cys-20, Cys-45, and Cys-102 together coordinate [4Fe-4S] cluster.

Belongs to the BchN/ChlN family. Protochlorophyllide reductase is composed of three subunits; BchL, BchN and BchB. Forms a heterotetramer of two BchB and two BchN subunits. [4Fe-4S] cluster serves as cofactor.

It carries out the reaction chlorophyllide a + oxidized 2[4Fe-4S]-[ferredoxin] + 2 ADP + 2 phosphate = protochlorophyllide a + reduced 2[4Fe-4S]-[ferredoxin] + 2 ATP + 2 H2O. Its pathway is porphyrin-containing compound metabolism; bacteriochlorophyll biosynthesis (light-independent). In terms of biological role, component of the dark-operative protochlorophyllide reductase (DPOR) that uses Mg-ATP and reduced ferredoxin to reduce ring D of protochlorophyllide (Pchlide) to form chlorophyllide a (Chlide). This reaction is light-independent. The NB-protein (BchN-BchB) is the catalytic component of the complex. The sequence is that of Light-independent protochlorophyllide reductase subunit N from Chlorobaculum tepidum (strain ATCC 49652 / DSM 12025 / NBRC 103806 / TLS) (Chlorobium tepidum).